The following is a 605-amino-acid chain: ABC transporter E family member 2 (605 aa).

The 30-residue stretch at 46-75 (KLAFISEELCIGCGICVKKCPFEAIQIINL) folds into the 4Fe-4S ferredoxin-type domain. ABC transporter domains are found at residues 70 to 315 (IQII…FLAG) and 344 to 568 (IQSY…LSHL). ATP contacts are provided by residues 110-117 (GTNGIGKS) and 381-388 (GENGTGKT).

Belongs to the ABC transporter superfamily. ABCE family. As to expression, expressed in roots, stems, leaves, flowers and siliques.

Its subcellular location is the membrane. The polypeptide is ABC transporter E family member 2 (ABCE2) (Arabidopsis thaliana (Mouse-ear cress)).